An 830-amino-acid chain; its full sequence is Interleukin-4 receptor subunit alpha (830 aa).

Residues 1–32 form the signal peptide; the sequence is MGWLCPGLTFSVSCLILVWAAGSGVTCVSPGG. At 33-240 the chain is on the extracellular side; it reads VRVLEWPICL…NYYEEPLEQR (208 aa). Cysteine 41 and cysteine 51 form a disulfide bridge. N-linked (GlcNAc...) asparagine glycans are attached at residues asparagine 60 and asparagine 78. A disulfide bond links cysteine 82 and cysteine 94. 3 N-linked (GlcNAc...) asparagine glycosylation sites follow: asparagine 120, asparagine 142, and asparagine 170. The Fibronectin type-III domain maps to 133 to 232; the sequence is APRNLMVHAN…WSPSVKWLNY (100 aa). Position 172 is a phosphoserine (serine 172). 2 N-linked (GlcNAc...) asparagine glycosylation sites follow: asparagine 184 and asparagine 217. The WSXWS motif signature appears at 220–224; the sequence is WSEWS. The helical transmembrane segment at 241-264 threads the bilayer; that stretch reads LPLGVSISCVVILIICLSCYFGII. The Cytoplasmic portion of the chain corresponds to 265–830; sequence RIKKEWWDQI…SPGPACMDTS (566 aa). The Box 1 motif signature appears at 270-278; that stretch reads WWDQIPNPA. A compositionally biased stretch (acidic residues) spans 378-387; it reads ENEEEEEEED. Disordered stretches follow at residues 378-403 and 450-488; these read ENEEEEEEEDKGSFCPSPENSGGSFQ and MPWAEFPRVGSPEASSQGKEQPLNPEPSPQATPTQSLAS. Positions 444–564 are required for IRS1 activation and IL4-induced cell growth; sequence ENASAPMPWA…ETWEQILRQS (121 aa). Phosphotyrosine is present on tyrosine 504. 2 disordered regions span residues 508–610 and 623–696; these read STFL…EAGY and CPGT…DGQK. Over residues 518 to 534 the composition is skewed to acidic residues; the sequence is GELDSDPELAEALEEVE. Residues 538 to 551 show a composition bias toward pro residues; it reads PAAPQPSEPPPTLQ. Residues 564–662 are required for IL4-induced gene expression; sequence SVLQRRAAPA…VPTPLFTFGL (99 aa). Over residues 570–582 the composition is skewed to low complexity; the sequence is AAPAPASGPSSSG. 2 positions are modified to phosphotyrosine: tyrosine 583 and tyrosine 610. Polar residues predominate over residues 623–635; sequence CPGTSGLEPSSGE. Residue tyrosine 638 is modified to Phosphotyrosine. 2 stretches are compositionally biased toward pro residues: residues 646 to 655 and 665 to 676; these read PGCPETPVPT and EPPPSPQNPPFP. The ITIM motif signature appears at 716–721; it reads IVYSAL. The interval 811-830 is disordered; that stretch reads SQTPTAVAMLSPGPACMDTS.

The protein belongs to the type I cytokine receptor family. Type 4 subfamily. The functional IL4 receptor is formed by initial binding of IL4 to IL4R. Subsequent recruitment to the complex of the common gamma chain, in immune cells, creates a type I receptor and, in non-immune cells, of IL13RA1 forms a type II receptor. IL4R can also interact with the IL13/IL13RA1 complex to form a similar type II receptor. Interacts with PIK3C3. Interacts with the SH2-containing phosphatases, PTPN6/SHIP1, PTPN11/SHIP2 and INPP5D/SHIP. Interacts with JAK1 through a Box 1-containing region; inhibited by SOCS5. Interacts with SOCS5; inhibits IL4 signaling. Interacts with JAK3. Interacts with CLM1. Interacts with IL13RA2. Post-translationally, on IL4 binding, phosphorylated on C-terminal tyrosine residues.

The protein localises to the membrane. Receptor for both interleukin 4 and interleukin 13. Couples to the JAK1/2/3-STAT6 pathway. The IL4 response is involved in promoting Th2 differentiation. The IL4/IL13 responses are involved in regulating IgE production and, chemokine and mucus production at sites of allergic inflammation. In certain cell types, can signal through activation of insulin receptor substrates, IRS1/IRS2. In Sus scrofa (Pig), this protein is Interleukin-4 receptor subunit alpha (IL4R).